We begin with the raw amino-acid sequence, 222 residues long: Cytochrome b6 (222 aa).

Residues 39–59 (IFYCLGGITLVCFIIQFATGF) form a helical membrane-spanning segment. C42 is a heme c binding site. The heme b site is built by H93 and H107. Transmembrane regions (helical) follow at residues 97–117 (ASMM…TGGF), 123–143 (LTWM…VTGY), and 193–213 (LHTF…FLMI). Positions 194 and 209 each coordinate heme b.

It belongs to the cytochrome b family. PetB subfamily. The 4 large subunits of the cytochrome b6-f complex are cytochrome b6, subunit IV (17 kDa polypeptide, PetD), cytochrome f and the Rieske protein, while the 4 small subunits are PetG, PetL, PetM and PetN. The complex functions as a dimer. It depends on heme b as a cofactor. Requires heme c as cofactor.

It is found in the cellular thylakoid membrane. Functionally, component of the cytochrome b6-f complex, which mediates electron transfer between photosystem II (PSII) and photosystem I (PSI), cyclic electron flow around PSI, and state transitions. The sequence is that of Cytochrome b6 from Rippkaea orientalis (strain PCC 8801 / RF-1) (Cyanothece sp. (strain PCC 8801)).